The sequence spans 303 residues: MAPPALQAQPPGGSQLRFLLFLLLLLLLLSWPSQGDALAMPEQRPSGPESQLNADELRGRFQDLLSRLHANQSREDSNSEPSPDPAVRILSPEVRLGSHGQLLLRVNRASLSQGLPEAYRVHRALLLLTPTARPWDITRPLKRALSLRGPRAPALRLRLTPPPDLAMLPSGGTQLELRLRVAAGRGRRSAHAHPRDSCPLGPGRCCHLETVQATLEDLGWSDWVLSPRQLQLSMCVGECPHLYRSANTHAQIKARLHGLQPDKVPAPCCVPSSYTPVVLMHRTDSGVSLQTYDDLVARGCHCA.

A signal peptide spans 1-30; it reads MAPPALQAQPPGGSQLRFLLFLLLLLLLLS. Positions 31–188 are excised as a propeptide; it reads WPSQGDALAM…LRVAAGRGRR (158 aa). A glycan (N-linked (GlcNAc...) asparagine) is linked at asparagine 71. 4 cysteine pairs are disulfide-bonded: cysteine 198-cysteine 205, cysteine 206-cysteine 269, cysteine 235-cysteine 300, and cysteine 239-cysteine 302.

It belongs to the TGF-beta family. As to quaternary structure, homodimer; disulfide-linked. Interacts with GFRAL and RET; ligand of GFRAL, which mediates GDF15 internalization and cellular signaling through interaction with RET via the formation of a 2:2:2 ternary complex composed of GDF15, GFRAL and RET. In terms of tissue distribution, detected in plasma (at protein level). Highly expressed in liver. Expressed in the distal small intestine, colon and kidney. Expressed in skeletal muscle in response to mitochondrial stress. Expressed by cardiomyocytes, expression is highly increased in heart diseases. Also detected in subcutaneous fat.

The protein localises to the secreted. In terms of biological role, hormone produced in response to various stresses to confer information about those stresses to the brain, and trigger an aversive response, characterized by nausea and/or loss of appetite. The aversive response is both required to reduce continuing exposure to those stresses at the time of exposure and to promote avoidance behavior in the future. Acts by binding to its receptor, GFRAL, activating GFRAL-expressing neurons localized in the area postrema and nucleus tractus solitarius of the brainstem. It then triggers the activation of neurons localized within the parabrachial nucleus and central amygdala, which constitutes part of the 'emergency circuit' that shapes responses to stressful conditions. The GDF15-GFRAL signal induces expression of genes involved in metabolism, such as lipid metabolism in adipose tissues. Required for avoidance behavior in response to food allergens: induced downstream of mast cell activation to promote aversion and minimize harmful effects of exposure to noxious substances. In addition to suppress appetite, also promotes weight loss by enhancing energy expenditure in muscle: acts by increasing calcium futile cycling in muscle. Contributes to the effect of metformin, an anti-diabetic drug, on appetite reduction and weight loss: produced in the kidney in response to metformin treatment, thereby activating the GDF15-GFRAL response, leading to reduced appetite and weight. Produced in response to anticancer drugs, such as camptothecin or cisplatin, promoting nausea and contributing to malnutrition. Overproduced in many cancers, promoting anorexia in cancer (cachexia). Responsible for the risk of nausea during pregnancy: high levels of GDF15 during pregnancy, mostly originating from embryos, are associated with increased nausea. Maternal sensitivity to nausea is probably determined by pre-pregnancy exposure to GDF15, females with naturally high level of GDF15 being less susceptible to nausea than female mice with low levels of GDF15 before pregnancy. Promotes metabolic adaptation in response to systemic inflammation caused by bacterial and viral infections in order to promote tissue tolerance and prevent tissue damage. Required for tissue tolerance in response to myocardial infarction by acting as an inhibitor of leukocyte integring activation, thereby protecting against cardiac rupture. Inhibits growth hormone signaling on hepatocytes. This chain is Growth/differentiation factor 15, found in Mus musculus (Mouse).